Reading from the N-terminus, the 485-residue chain is Argininosuccinate lyase (485 aa).

The protein belongs to the lyase 1 family. Argininosuccinate lyase subfamily.

The protein resides in the cytoplasm. It catalyses the reaction 2-(N(omega)-L-arginino)succinate = fumarate + L-arginine. It functions in the pathway amino-acid biosynthesis; L-arginine biosynthesis; L-arginine from L-ornithine and carbamoyl phosphate: step 3/3. This chain is Argininosuccinate lyase, found in Paracidovorax citrulli (strain AAC00-1) (Acidovorax citrulli).